The sequence spans 188 residues: Ribosome-recycling factor (188 aa).

The protein belongs to the RRF family.

The protein localises to the cytoplasm. In terms of biological role, responsible for the release of ribosomes from messenger RNA at the termination of protein biosynthesis. May increase the efficiency of translation by recycling ribosomes from one round of translation to another. This Anaeromyxobacter dehalogenans (strain 2CP-1 / ATCC BAA-258) protein is Ribosome-recycling factor.